Reading from the N-terminus, the 324-residue chain is Olfactory receptor 6K2 (324 aa).

Topologically, residues 1-25 (MESPNRTTIQEFIFSAFPYSWVKSV) are extracellular. N-linked (GlcNAc...) asparagine glycosylation is present at Asn5. The helical transmembrane segment at 26–46 (VCFVPLLFIYAFIVVGNLVII) threads the bilayer. The Cytoplasmic segment spans residues 47 to 54 (TVVQLNTH). The chain crosses the membrane as a helical span at residues 55-75 (LHTPMYTFISALSFLEIWYTT). The Extracellular portion of the chain corresponds to 76–98 (ATIPKMLSSLLSERSISFNGCLL). Cysteines 96 and 188 form a disulfide. A helical transmembrane segment spans residues 99 to 119 (QMYFFHSTGICEVCLLTVMAF). At 120 to 138 (DHYLAICSPLHYPSIMTPK) the chain is on the cytoplasmic side. The helical transmembrane segment at 139-159 (LCTQLTLSCCVCGFITPLPEI) threads the bilayer. Residues 160–198 (AWISTLPFCGSNHLEHIFCDFLPVLRLACTDTRAIVMIQ) lie on the Extracellular side of the membrane. The chain crosses the membrane as a helical span at residues 199 to 218 (VVDVIHAVEIITAVMLIFMS). The Cytoplasmic segment spans residues 219 to 238 (YDGIVAVILRIHSAGGRRTA). The chain crosses the membrane as a helical span at residues 239-259 (FSTCVSHFIVFSLFFGSVTLM). The Extracellular segment spans residues 260–272 (YLRFSATYSLFWD). Residues 273 to 293 (IAIALAFAVLSPFFNPIIYSL) traverse the membrane as a helical segment. Topologically, residues 294-324 (RNKEIKEAIKKHIGQAKIFFSVRPGTSSKIF) are cytoplasmic.

Belongs to the G-protein coupled receptor 1 family.

The protein localises to the cell membrane. Functionally, odorant receptor. The polypeptide is Olfactory receptor 6K2 (OR6K2) (Homo sapiens (Human)).